Reading from the N-terminus, the 142-residue chain is Large ribosomal subunit protein uL13 (142 aa).

This sequence belongs to the universal ribosomal protein uL13 family. In terms of assembly, part of the 50S ribosomal subunit.

Its function is as follows. This protein is one of the early assembly proteins of the 50S ribosomal subunit, although it is not seen to bind rRNA by itself. It is important during the early stages of 50S assembly. The polypeptide is Large ribosomal subunit protein uL13 (Azoarcus sp. (strain BH72)).